A 142-amino-acid chain; its full sequence is Large ribosomal subunit protein uL11 (142 aa).

The protein belongs to the universal ribosomal protein uL11 family. As to quaternary structure, part of the ribosomal stalk of the 50S ribosomal subunit. Interacts with L10 and the large rRNA to form the base of the stalk. L10 forms an elongated spine to which L12 dimers bind in a sequential fashion forming a multimeric L10(L12)X complex. In terms of processing, one or more lysine residues are methylated.

Forms part of the ribosomal stalk which helps the ribosome interact with GTP-bound translation factors. The protein is Large ribosomal subunit protein uL11 of Brucella abortus (strain S19).